A 1039-amino-acid chain; its full sequence is Antigenic heat-stable 120 kDa protein (1039 aa).

Disordered stretches follow at residues 1-115 (MSKD…TSDP), 408-438 (SSIETPTTTQVPPITPANQPLQPETSQMPQP), and 1020-1039 (QSENLNKSTPIKRESSFPPR). Residues 31 to 44 (PISSTANKDGNPDT) are compositionally biased toward polar residues. The segment covering 54-69 (EYTEEQKQKLEQEQKE) has biased composition (basic and acidic residues). A compositionally biased stretch (low complexity) spans 85-114 (FSFTPASSTQSTPSISSLSGGISSDSQTSD). Residues 424 to 438 (ANQPLQPETSQMPQP) show a composition bias toward polar residues. Residues 1030-1039 (IKRESSFPPR) show a composition bias toward basic and acidic residues.

The protein resides in the cytoplasm. The sequence is that of Antigenic heat-stable 120 kDa protein (sca4) from Rickettsia felis (strain ATCC VR-1525 / URRWXCal2) (Rickettsia azadi).